A 175-amino-acid chain; its full sequence is Adenine phosphoribosyltransferase (175 aa).

This sequence belongs to the purine/pyrimidine phosphoribosyltransferase family. In terms of assembly, homodimer.

Its subcellular location is the cytoplasm. It catalyses the reaction AMP + diphosphate = 5-phospho-alpha-D-ribose 1-diphosphate + adenine. The protein operates within purine metabolism; AMP biosynthesis via salvage pathway; AMP from adenine: step 1/1. Functionally, catalyzes a salvage reaction resulting in the formation of AMP, that is energically less costly than de novo synthesis. This is Adenine phosphoribosyltransferase from Clavibacter michiganensis subsp. michiganensis (strain NCPPB 382).